The chain runs to 174 residues: Terminase small subunit (174 aa).

It belongs to the skunalikevirus terminase small subunit family.

Functionally, probable terminase small subunit. The terminase lies at a unique vertex of the procapsid and is composed of two subunits, a small terminase subunit and a large terminase subunit. Both terminase subunits heterooligomerize and are docked on the portal protein to form the packaging machine. Once the capsid is packaged with the DNA, the terminase complex is substituted by the connector proteins gp15. The sequence is that of Terminase small subunit from Lactococcus lactis (Lactococcus lactis bacteriophage SK1).